Here is a 423-residue protein sequence, read N- to C-terminus: Glutamate-1-semialdehyde 2,1-aminomutase (423 aa).

N6-(pyridoxal phosphate)lysine is present on lysine 263.

Belongs to the class-III pyridoxal-phosphate-dependent aminotransferase family. HemL subfamily. Pyridoxal 5'-phosphate serves as cofactor.

The protein resides in the cytoplasm. It carries out the reaction (S)-4-amino-5-oxopentanoate = 5-aminolevulinate. It participates in porphyrin-containing compound metabolism; protoporphyrin-IX biosynthesis; 5-aminolevulinate from L-glutamyl-tRNA(Glu): step 2/2. In Ignicoccus hospitalis (strain KIN4/I / DSM 18386 / JCM 14125), this protein is Glutamate-1-semialdehyde 2,1-aminomutase.